The primary structure comprises 115 residues: Nucleoid-associated protein Pro_0020 (115 aa).

The protein belongs to the YbaB/EbfC family. In terms of assembly, homodimer.

The protein localises to the cytoplasm. It localises to the nucleoid. In terms of biological role, binds to DNA and alters its conformation. May be involved in regulation of gene expression, nucleoid organization and DNA protection. The sequence is that of Nucleoid-associated protein Pro_0020 from Prochlorococcus marinus (strain SARG / CCMP1375 / SS120).